A 284-amino-acid polypeptide reads, in one-letter code: Ribosomal RNA small subunit methyltransferase A (284 aa).

S-adenosyl-L-methionine-binding residues include Asn28, Leu30, Gly55, Glu77, Asp103, and Asn123.

This sequence belongs to the class I-like SAM-binding methyltransferase superfamily. rRNA adenine N(6)-methyltransferase family. RsmA subfamily.

The protein resides in the cytoplasm. The catalysed reaction is adenosine(1518)/adenosine(1519) in 16S rRNA + 4 S-adenosyl-L-methionine = N(6)-dimethyladenosine(1518)/N(6)-dimethyladenosine(1519) in 16S rRNA + 4 S-adenosyl-L-homocysteine + 4 H(+). In terms of biological role, specifically dimethylates two adjacent adenosines (A1518 and A1519) in the loop of a conserved hairpin near the 3'-end of 16S rRNA in the 30S particle. May play a critical role in biogenesis of 30S subunits. This Bradyrhizobium diazoefficiens (strain JCM 10833 / BCRC 13528 / IAM 13628 / NBRC 14792 / USDA 110) protein is Ribosomal RNA small subunit methyltransferase A.